A 503-amino-acid polypeptide reads, in one-letter code: Ferulic acid decarboxylase 1 (503 aa).

The Mn(2+) site is built by Asn170, His193, and Glu236. Residues 170–175 (NWSIAR), 192–193 (QH), and Glu236 each bind prenylated FMN. Glu285 (proton donor) is an active-site residue. Lys394 provides a ligand contact to prenylated FMN.

It belongs to the UbiD family. UbiD-like/FDC subfamily. In terms of assembly, homodimer. May form higher order oligomers. It depends on Mn(2+) as a cofactor. Prenylated FMN serves as cofactor.

The protein resides in the cytoplasm. It carries out the reaction (E)-4-coumarate + H(+) = 4-vinylphenol + CO2. The enzyme catalyses (E)-cinnamate + H(+) = styrene + CO2. It catalyses the reaction (E)-ferulate + H(+) = 2-methoxy-4-vinylphenol + CO2. Its function is as follows. Catalyzes the reversible decarboxylation of aromatic carboxylic acids like ferulic acid, p-coumaric acid or cinnamic acid, producing the corresponding vinyl derivatives 4-vinylphenol, 4-vinylguaiacol, and styrene, respectively, which play the role of aroma metabolites. Not essential for ubiquinone synthesis. This is Ferulic acid decarboxylase 1 from Saccharomyces cerevisiae (strain ATCC 204508 / S288c) (Baker's yeast).